The following is a 329-amino-acid chain: Acetyl-coenzyme A carboxylase carboxyl transferase subunit alpha (329 aa).

The 255-residue stretch at 40–294 (QLESLASRRR…RAALERHLGE (255 aa)) folds into the CoA carboxyltransferase C-terminal domain.

Belongs to the AccA family. Acetyl-CoA carboxylase is a heterohexamer composed of biotin carboxyl carrier protein (AccB), biotin carboxylase (AccC) and two subunits each of ACCase subunit alpha (AccA) and ACCase subunit beta (AccD).

The protein localises to the cytoplasm. The catalysed reaction is N(6)-carboxybiotinyl-L-lysyl-[protein] + acetyl-CoA = N(6)-biotinyl-L-lysyl-[protein] + malonyl-CoA. It participates in lipid metabolism; malonyl-CoA biosynthesis; malonyl-CoA from acetyl-CoA: step 1/1. Component of the acetyl coenzyme A carboxylase (ACC) complex. First, biotin carboxylase catalyzes the carboxylation of biotin on its carrier protein (BCCP) and then the CO(2) group is transferred by the carboxyltransferase to acetyl-CoA to form malonyl-CoA. The sequence is that of Acetyl-coenzyme A carboxylase carboxyl transferase subunit alpha from Synechococcus sp. (strain CC9902).